Consider the following 376-residue polypeptide: Heterodimeric geranylgeranyl pyrophosphate synthase large subunit 2 (376 aa).

The first 24 residues, 1–24, serve as a signal peptide directing secretion; that stretch reads MEPQILFLYLSLFILSLNFFFTNL. K125, R128, and H157 together coordinate isopentenyl diphosphate. The Mg(2+) site is built by D164 and D170. R175 provides a ligand contact to dimethylallyl diphosphate. R176 contacts isopentenyl diphosphate. Dimethylallyl diphosphate-binding residues include K261, T262, Q299, K316, and K326.

The protein belongs to the FPP/GGPP synthase family. Monomer. Part of a heterodimeric geranyl(geranyl)diphosphate synthase. Interacts with GGR. Requires Mg(2+) as cofactor. Mainly expressed in flowers.

The protein localises to the endoplasmic reticulum. It catalyses the reaction isopentenyl diphosphate + dimethylallyl diphosphate = (2E)-geranyl diphosphate + diphosphate. The enzyme catalyses isopentenyl diphosphate + (2E)-geranyl diphosphate = (2E,6E)-farnesyl diphosphate + diphosphate. It carries out the reaction isopentenyl diphosphate + (2E,6E)-farnesyl diphosphate = (2E,6E,10E)-geranylgeranyl diphosphate + diphosphate. It participates in isoprenoid biosynthesis; farnesyl diphosphate biosynthesis; farnesyl diphosphate from geranyl diphosphate and isopentenyl diphosphate: step 1/1. It functions in the pathway isoprenoid biosynthesis; geranyl diphosphate biosynthesis; geranyl diphosphate from dimethylallyl diphosphate and isopentenyl diphosphate: step 1/1. The protein operates within isoprenoid biosynthesis; geranylgeranyl diphosphate biosynthesis; geranylgeranyl diphosphate from farnesyl diphosphate and isopentenyl diphosphate: step 1/1. Its function is as follows. Heterodimeric geranyl(geranyl)-diphosphate (GPP) synthase large subunit. In vitro, the large subunit catalyzes mainly the trans-addition of the three molecules of IPP onto DMAPP to form geranylgeranyl pyrophosphate while the small subunit alone is inactive. Upon association of the two subunits, the product profile is not changed. This is Heterodimeric geranylgeranyl pyrophosphate synthase large subunit 2 (GGPPS2) from Arabidopsis thaliana (Mouse-ear cress).